Reading from the N-terminus, the 473-residue chain is Spliceosome-associated protein CWC27 homolog (473 aa).

At Ser2 the chain carries N-acetylserine. The PPIase cyclophilin-type domain maps to 11–166 (TNGKVLLKTT…NPHKIKSCEV (156 aa)). Over residues 177–193 (REIKRPKKEKPEEEVKK) the composition is skewed to basic and acidic residues. Disordered stretches follow at residues 177–386 (REIK…EDQT) and 399–473 (QAIA…KERR). Residues 206 to 230 (SFGEEAEEEEEEVNRVSQSMKGKSK) adopt a coiled-coil conformation. The span at 231–241 (SSHDLLKDDPH) shows a compositional bias: basic and acidic residues. The segment covering 257–266 (GDLDDGGEGE) has biased composition (acidic residues). Basic and acidic residues-rich tracts occupy residues 267–287 (SAEHDEYIDGDEKNLMRERIA), 305–348 (EVEK…KRSE), and 360–372 (EYRREKQKYEALR). Residues 305-378 (EVEKKSVNRS…EALRKQQSKK (74 aa)) adopt a coiled-coil conformation. Ser347 is modified (phosphoserine). Residues 405–419 (PENDIPETEVEDDEG) are compositionally biased toward acidic residues. Composition is skewed to basic and acidic residues over residues 426 to 438 (QFEDKSRKVKDAS) and 458 to 473 (RREESKKLMREKKERR).

This sequence belongs to the cyclophilin-type PPIase family. As to quaternary structure, part of the activated spliceosome B/catalytic step 1 spliceosome, one of the forms of the spliceosome which has a well-formed active site but still cannot catalyze the branching reaction and is composed at least of 52 proteins, the U2, U5 and U6 snRNAs and the pre-mRNA. Recruited during early steps of activated spliceosome B maturation, it is probably one of the first proteins released from this complex as he matures to the spliceosome C complex. Component of the minor spliceosome, which splices U12-type introns.

The protein resides in the nucleus. In terms of biological role, as part of the spliceosome, plays a role in pre-mRNA splicing. Probable inactive PPIase with no peptidyl-prolyl cis-trans isomerase activity. As a component of the minor spliceosome, involved in the splicing of U12-type introns in pre-mRNAs. The sequence is that of Spliceosome-associated protein CWC27 homolog from Pongo abelii (Sumatran orangutan).